Consider the following 463-residue polypeptide: Hydroxyacid-oxoacid transhydrogenase, mitochondrial (463 aa).

The protein belongs to the iron-containing alcohol dehydrogenase family. Hydroxyacid-oxoacid transhydrogenase subfamily.

It is found in the mitochondrion. It carries out the reaction (S)-3-hydroxybutanoate + 2-oxoglutarate = (R)-2-hydroxyglutarate + acetoacetate. The catalysed reaction is 4-hydroxybutanoate + 2-oxoglutarate = (R)-2-hydroxyglutarate + succinate semialdehyde. Catalyzes the cofactor-independent reversible oxidation of gamma-hydroxybutyrate (GHB) to succinic semialdehyde (SSA) coupled to reduction of 2-ketoglutarate (2-KG) to D-2-hydroxyglutarate (D-2-HG). L-3-hydroxybutyrate (L-3-OHB) is also a substrate for HOT when using 2-KG as hydrogen acceptor, resulting in the formation of D-2-HG. The polypeptide is Hydroxyacid-oxoacid transhydrogenase, mitochondrial (adhfe1) (Xenopus laevis (African clawed frog)).